Consider the following 104-residue polypeptide: Pterin-4-alpha-carbinolamine dehydratase (104 aa).

A2 carries the N-acetylalanine modification. Substrate-binding positions include 61–63 (DHH) and 78–81 (STHE).

This sequence belongs to the pterin-4-alpha-carbinolamine dehydratase family. In terms of assembly, homotetramer and homodimer. Heterotetramer with HNF1A; formed by a dimer of dimers. Interacts with HNF1B (via HNF-p1 domain); the interaction increases HNF1B transactivation activity.

It is found in the cytoplasm. The protein localises to the nucleus. The catalysed reaction is (4aS,6R)-4a-hydroxy-L-erythro-5,6,7,8-tetrahydrobiopterin = (6R)-L-erythro-6,7-dihydrobiopterin + H2O. Its function is as follows. Involved in tetrahydrobiopterin biosynthesis. Seems to both prevent the formation of 7-pterins and accelerate the formation of quinonoid-BH2. Coactivator for HNF1A-dependent transcription. Regulates the dimerization of homeodomain protein HNF1A and enhances its transcriptional activity. Also acts as a coactivator for HNF1B-dependent transcription. In Rattus norvegicus (Rat), this protein is Pterin-4-alpha-carbinolamine dehydratase (Pcbd1).